The chain runs to 232 residues: Probable caffeoyl-CoA O-methyltransferase At4g26220 (232 aa).

Residue K7 participates in substrate binding. S-adenosyl-L-methionine-binding positions include T49, E71, 73-74 (GV), S79, D97, and A126. D149 is a binding site for substrate. An a divalent metal cation-binding site is contributed by D149. Residue D151 coordinates S-adenosyl-L-methionine. Residues D175 and N176 each coordinate a divalent metal cation.

It belongs to the class I-like SAM-binding methyltransferase superfamily. Cation-dependent O-methyltransferase family. CCoAMT subfamily. The cofactor is a divalent metal cation.

The catalysed reaction is (E)-caffeoyl-CoA + S-adenosyl-L-methionine = (E)-feruloyl-CoA + S-adenosyl-L-homocysteine + H(+). It functions in the pathway aromatic compound metabolism; phenylpropanoid biosynthesis. Functionally, methylates caffeoyl-CoA to feruloyl-CoA and 5-hydroxyferuloyl-CoA to sinapoyl-CoA. Plays a role in the synthesis of feruloylated polysaccharides. Involved in the reinforcement of the plant cell wall. Also involved in the responding to wounding or pathogen challenge by the increased formation of cell wall-bound ferulic acid polymers. The sequence is that of Probable caffeoyl-CoA O-methyltransferase At4g26220 from Arabidopsis thaliana (Mouse-ear cress).